Here is a 398-residue protein sequence, read N- to C-terminus: tRNA-specific 2-thiouridylase MnmA (398 aa).

Residues 19–26 (AMSGGVDS) and Leu45 contribute to the ATP site. The active-site Nucleophile is the Cys113. Cys113 and Cys210 are disulfide-bonded. Gly137 serves as a coordination point for ATP. Residues 160–162 (RDQ) form an interaction with tRNA region. Cys210 (cysteine persulfide intermediate) is an active-site residue.

This sequence belongs to the MnmA/TRMU family.

It localises to the cytoplasm. It catalyses the reaction S-sulfanyl-L-cysteinyl-[protein] + uridine(34) in tRNA + AH2 + ATP = 2-thiouridine(34) in tRNA + L-cysteinyl-[protein] + A + AMP + diphosphate + H(+). Its function is as follows. Catalyzes the 2-thiolation of uridine at the wobble position (U34) of tRNA, leading to the formation of s(2)U34. The protein is tRNA-specific 2-thiouridylase MnmA of Rhodopseudomonas palustris (strain BisB5).